The sequence spans 120 residues: Nitrogen regulatory protein GlnK3 (120 aa).

ADP-binding positions include Thr40 and 48-50 (GEQ). Residues Thr40 and 48 to 50 (GEQ) each bind ATP. 2-oxoglutarate is bound by residues 48–52 (GEQKG) and Lys69. Residues Val75 and 98 to 101 (GDGR) each bind ADP. Residues Val75 and 98–101 (GDGR) each bind ATP. Gly98 serves as a coordination point for 2-oxoglutarate.

It belongs to the P(II) protein family. Homotrimer. Interacts and forms a complex with Amt3.

It is found in the cytoplasm. Activity is influenced by intracellular pools of the effector molecules ATP, ADP and 2-oxoglutarate. It senses the cellular nitrogen status through 2-oxoglutarate, and the energy level of the cell by binding both ATP and ADP with different affinities. ATP and 2-oxoglutarate prohibit binding to Amt3. ADP promotes the complex formation. Its function is as follows. Involved in the regulation of nitrogen metabolism. Regulates the activity of its targets by protein-protein interaction in response to the nitrogen status of the cell. Regulates the activity of the ammonia channel Amt3 via direct interaction. This is Nitrogen regulatory protein GlnK3 from Archaeoglobus fulgidus (strain ATCC 49558 / DSM 4304 / JCM 9628 / NBRC 100126 / VC-16).